Here is a 94-residue protein sequence, read N- to C-terminus: Small ribosomal subunit protein uS19c (94 aa).

Belongs to the universal ribosomal protein uS19 family.

The protein resides in the plastid. Its subcellular location is the chloroplast. In terms of biological role, protein S19 forms a complex with S13 that binds strongly to the 16S ribosomal RNA. This chain is Small ribosomal subunit protein uS19c, found in Cyanidioschyzon merolae (strain NIES-3377 / 10D) (Unicellular red alga).